The primary structure comprises 252 residues: Short chain dehydrogenase andC (252 aa).

Positions 1 to 25 are cleaved as a signal peptide; the sequence is MGFLQDKVVIITGAAAGIGLATATA. NADP(+)-binding residues include Ile11, Asp57, and Arg119. The Proton donor role is filled by Ser137. NADP(+) is bound by residues Tyr151 and Lys155. Tyr151 (proton acceptor) is an active-site residue. Lys155 (lowers pKa of active site Tyr) is an active-site residue.

Belongs to the short-chain dehydrogenases/reductases (SDR) family.

It participates in secondary metabolite biosynthesis; terpenoid biosynthesis. Short chain dehydrogenase; part of the gene cluster that mediates the biosynthesis of anditomin, a fungal meroterpenoid. The first step of the pathway is the synthesis of 3,5-dimethylorsellinic acid (DMOA) by the polyketide synthase andM. DMOA is then converted to the phthalide compound 5,7-dihydroxy-4,6-dimethylphthalide (DHDMP) by the cytochrome P450 monooxygenase andK, which is further prenylated by the prenyltransferase andD to yield farnesyl-DHDMP. Further epoxidation by the FAD-dependent monooxygenase andE leads to epoxyfarnesyl-DHDMP. The next step involves the terpene cyclase andB that converts epoxyfarnesyl-DHDMP into preandiloid A through opening of the epoxide ring followed by the cyclization of the farnesyl moiety. Preandiloid A is in turn oxidized at the C-3 hydroxyl group to yield preandiloid B by the dehydrogenase andC. The dioxygenase andA is solely responsible for the dehydrogenation of preandiloid B leading to the enone preandiloid C, as well as for the intriguing structural rearrangement to generate the bicyclo[2.2.2]octane core, transforming preandiloid C into andiconin. FAD-binding monooxygenase andJ then produces andilesin D which is reduced by dehydrogenase andI to yield andilesin A. Action of acetyltransferase andG followed by a spontaneous acetate elimination leads then to andilesin B, which is in turn substrate of the short chain dehydrogenase andH to yield andilesin C. Finally, the dioxygenase andF catalyzes the transformation of andilesin C to anditomin. In Emericella variicolor (Aspergillus stellatus), this protein is Short chain dehydrogenase andC.